The chain runs to 507 residues: Maturase K (507 aa).

Belongs to the intron maturase 2 family. MatK subfamily.

The protein localises to the plastid. Its subcellular location is the chloroplast. Its function is as follows. Usually encoded in the trnK tRNA gene intron. Probably assists in splicing its own and other chloroplast group II introns. The sequence is that of Maturase K from Humulus lupulus (European hop).